The primary structure comprises 226 residues: 1-hydroxy-2-glutathionyl-2-methyl-3-butene dehydrogenase (226 aa).

It belongs to the short-chain dehydrogenases/reductases (SDR) family.

The enzyme catalyses 2-glutathionyl-2-methylbut-3-en-1-ol + 2 NAD(+) + H2O = 2-glutathionyl-2-methylbut-3-enoate + 2 NADH + 3 H(+). It catalyses the reaction 2-glutathionyl-2-methylbut-3-en-1-ol + NAD(+) = 2-glutathionyl-2-methylbut-3-enal + NADH + H(+). The catalysed reaction is 2-glutathionyl-2-methylbut-3-enal + NAD(+) + H2O = 2-glutathionyl-2-methylbut-3-enoate + NADH + 2 H(+). Functionally, involved in isoprene degradation. Catalyzes the two-step NAD(+)-dependent oxidation of 2-glutathionyl-2-methylbut-3-en-1-ol (HGMB) to 2-glutathionyl-2-methylbut-3-enoate (GMBA). In Rhodococcus sp. (strain AD45), this protein is 1-hydroxy-2-glutathionyl-2-methyl-3-butene dehydrogenase.